Consider the following 421-residue polypeptide: D-amino acid dehydrogenase (421 aa).

FAD is bound at residue 3 to 17; the sequence is VTILGAGVIGVTSAY.

Belongs to the DadA oxidoreductase family. The cofactor is FAD.

It catalyses the reaction a D-alpha-amino acid + A + H2O = a 2-oxocarboxylate + AH2 + NH4(+). It functions in the pathway amino-acid degradation; D-alanine degradation; NH(3) and pyruvate from D-alanine: step 1/1. Its function is as follows. Oxidative deamination of D-amino acids. The polypeptide is D-amino acid dehydrogenase (Allorhizobium ampelinum (strain ATCC BAA-846 / DSM 112012 / S4) (Agrobacterium vitis (strain S4))).